We begin with the raw amino-acid sequence, 268 residues long: Acyl-CoA-binding domain-containing protein 4 (268 aa).

One can recognise an ACB domain in the interval 12–101 (CQKQFQAAVS…MKLVAQKVID (90 aa)). An acyl-CoA contacts are provided by residues 23–32 (IQNLPKNGSY), 43–47 (YSYYK), lysine 69, and tyrosine 88. Residues 151–175 (AVSEPPCLPKEPAPPSPESHSPRDL) form a disordered region. Over residues 156–167 (PCLPKEPAPPSP) the composition is skewed to pro residues. Phosphoserine is present on residues serine 166 and serine 171.

Its function is as follows. Binds medium- and long-chain acyl-CoA esters and may function as an intracellular carrier of acyl-CoA esters. This is Acyl-CoA-binding domain-containing protein 4 (ACBD4) from Homo sapiens (Human).